We begin with the raw amino-acid sequence, 123 residues long: Small ribosomal subunit protein uS13 (123 aa).

Residues 92–123 (HRRGLPVRGQKTKTNARTRKGPKKLVVSRKKK) are disordered.

It belongs to the universal ribosomal protein uS13 family. Part of the 30S ribosomal subunit. Forms a loose heterodimer with protein S19. Forms two bridges to the 50S subunit in the 70S ribosome.

Located at the top of the head of the 30S subunit, it contacts several helices of the 16S rRNA. In the 70S ribosome it contacts the 23S rRNA (bridge B1a) and protein L5 of the 50S subunit (bridge B1b), connecting the 2 subunits; these bridges are implicated in subunit movement. Contacts the tRNAs in the A and P-sites. The chain is Small ribosomal subunit protein uS13 from Clostridium tetani (strain Massachusetts / E88).